Here is a 97-residue protein sequence, read N- to C-terminus: Co-chaperonin GroES (97 aa).

Belongs to the GroES chaperonin family. Heptamer of 7 subunits arranged in a ring. Interacts with the chaperonin GroEL.

Its subcellular location is the cytoplasm. Functionally, together with the chaperonin GroEL, plays an essential role in assisting protein folding. The GroEL-GroES system forms a nano-cage that allows encapsulation of the non-native substrate proteins and provides a physical environment optimized to promote and accelerate protein folding. GroES binds to the apical surface of the GroEL ring, thereby capping the opening of the GroEL channel. This chain is Co-chaperonin GroES, found in Buchnera aphidicola subsp. Tetraneura caerulescens.